Reading from the N-terminus, the 232-residue chain is Phosphatidylserine decarboxylase proenzyme (232 aa).

The active-site Schiff-base intermediate with substrate; via pyruvic acid is the Ser190. Residue Ser190 is modified to Pyruvic acid (Ser); by autocatalysis.

This sequence belongs to the phosphatidylserine decarboxylase family. PSD-A subfamily. Heterodimer of a large membrane-associated beta subunit and a small pyruvoyl-containing alpha subunit. The cofactor is pyruvate. Is synthesized initially as an inactive proenzyme. Formation of the active enzyme involves a self-maturation process in which the active site pyruvoyl group is generated from an internal serine residue via an autocatalytic post-translational modification. Two non-identical subunits are generated from the proenzyme in this reaction, and the pyruvate is formed at the N-terminus of the alpha chain, which is derived from the carboxyl end of the proenzyme. The post-translation cleavage follows an unusual pathway, termed non-hydrolytic serinolysis, in which the side chain hydroxyl group of the serine supplies its oxygen atom to form the C-terminus of the beta chain, while the remainder of the serine residue undergoes an oxidative deamination to produce ammonia and the pyruvoyl prosthetic group on the alpha chain.

It localises to the cell membrane. It catalyses the reaction a 1,2-diacyl-sn-glycero-3-phospho-L-serine + H(+) = a 1,2-diacyl-sn-glycero-3-phosphoethanolamine + CO2. It functions in the pathway phospholipid metabolism; phosphatidylethanolamine biosynthesis; phosphatidylethanolamine from CDP-diacylglycerol: step 2/2. Catalyzes the formation of phosphatidylethanolamine (PtdEtn) from phosphatidylserine (PtdSer). The protein is Phosphatidylserine decarboxylase proenzyme of Methylocella silvestris (strain DSM 15510 / CIP 108128 / LMG 27833 / NCIMB 13906 / BL2).